The following is a 1887-amino-acid chain: DNA-directed RNA polymerase II subunit RPB1 (1887 aa).

Zn(2+) is bound by residues Cys-67, Cys-70, Cys-77, His-80, Cys-107, Cys-110, Cys-150, and Cys-176. The interval Met-156–His-178 is disordered. Asp-487, Asp-489, and Asp-491 together coordinate Mg(2+). The segment at Pro-825–Glu-837 is bridging helix. Residue Lys-1260 forms a Glycyl lysine isopeptide (Lys-Gly) (interchain with G-Cter in ubiquitin) linkage. 2 disordered regions span residues Thr-1528–Met-1565 and Tyr-1579–Asp-1887. Composition is skewed to low complexity over residues Pro-1529–Met-1565, Tyr-1579–Pro-1610, and Pro-1626–Gln-1650. The stretch at Tyr-1579–Asn-1585 is repeat 1. Residues Tyr-1579–Thr-1881 are C-terminal domain (CTD); 32 X 7 AA approximate tandem repeats of Y-[ST]-P-[STNVAPGN]-[STGMA]-[PSTR]-[SNAGCQKTLRIMH]. The 2; approximate repeat unit spans residues Tyr-1586–Gly-1592. Tandem repeats lie at residues Tyr-1598 to Asn-1604, Tyr-1605 to Leu-1611, Tyr-1631 to Gly-1637, and Tyr-1638 to Val-1644. The span at Phe-1651 to Ile-1664 shows a compositional bias: polar residues. The segment covering Tyr-1665 to Thr-1760 has biased composition (low complexity). 17 repeat units span residues Tyr-1671–Asn-1677, Tyr-1678–Ser-1684, Tyr-1685–Ser-1691, Tyr-1692–Ser-1698, Tyr-1699–Cys-1705, Tyr-1706–Ser-1712, Tyr-1713–Asn-1719, Tyr-1720–Ser-1726, Tyr-1727–Asn-1733, Tyr-1740–Ala-1746, Tyr-1754–Thr-1760, Tyr-1761–Ser-1767, Tyr-1777–Gln-1783, Tyr-1784–Lys-1790, Tyr-1791–Leu-1797, Tyr-1798–Gln-1804, and Tyr-1811–Thr-1817. Residues Gln-1776–Pro-1786 are compositionally biased toward polar residues. Residues Ser-1788–Pro-1813 are compositionally biased toward low complexity. The span at Thr-1814–Ile-1831 shows a compositional bias: polar residues. Residues Tyr-1818–Arg-1824 form a 24; approximate repeat. 8 repeat units span residues Tyr-1825–Ile-1831, Tyr-1832–Lys-1838, Tyr-1839–Thr-1845, Tyr-1846–Asn-1852, Tyr-1853–Met-1859, Tyr-1860–Ser-1866, Tyr-1868–Ala-1874, and Tyr-1875–Thr-1881. Positions Tyr-1832–Thr-1849 are enriched in low complexity. Residues Ala-1850–Met-1859 are compositionally biased toward polar residues. A compositionally biased stretch (low complexity) spans Tyr-1860 to Thr-1881.

This sequence belongs to the RNA polymerase beta' chain family. As to quaternary structure, component of the RNA polymerase II (Pol II) complex consisting of 12 subunits. Post-translationally, the tandem 7 residues repeats in the C-terminal domain (CTD) can be highly phosphorylated. The phosphorylation activates Pol II. Phosphorylation occurs mainly at residues 'Ser-2' and 'Ser-5' of the heptapeptide repeat. The phosphorylation state is believed to result from the balanced action of site-specific CTD kinases and phosphatase, and a 'CTD code' that specifies the position of Pol II within the transcription cycle has been proposed. Following transcription stress, the elongating form of RNA polymerase II (RNA pol IIo) is polyubiquitinated via 'Lys-63'-linkages on Lys-1260 at DNA damage sites without leading to degradation: ubiquitination promotes RNA pol IIo backtracking to allow access by the transcription-coupled nucleotide excision repair (TC-NER) machinery. Subsequent DEF1-dependent polyubiquitination by the elongin complex via 'Lys-48'-linkages may lead to proteasome-mediated degradation; presumably at stalled RNA pol II where TC-NER has failed, to halt global transcription and enable 'last resort' DNA repair pathways.

The protein resides in the nucleus. It carries out the reaction RNA(n) + a ribonucleoside 5'-triphosphate = RNA(n+1) + diphosphate. DNA-dependent RNA polymerase catalyzes the transcription of DNA into RNA using the four ribonucleoside triphosphates as substrates. Largest and catalytic component of RNA polymerase II which synthesizes mRNA precursors and many functional non-coding RNAs. Forms the polymerase active center together with the second largest subunit. Pol II is the central component of the basal RNA polymerase II transcription machinery. It is composed of mobile elements that move relative to each other. RPB1 is part of the core element with the central large cleft, the clamp element that moves to open and close the cleft and the jaws that are thought to grab the incoming DNA template. At the start of transcription, a single-stranded DNA template strand of the promoter is positioned within the central active site cleft of Pol II. A bridging helix emanates from RPB1 and crosses the cleft near the catalytic site and is thought to promote translocation of Pol II by acting as a ratchet that moves the RNA-DNA hybrid through the active site by switching from straight to bent conformations at each step of nucleotide addition. During transcription elongation, Pol II moves on the template as the transcript elongates. Elongation is influenced by the phosphorylation status of the C-terminal domain (CTD) of Pol II largest subunit (RPB1), which serves as a platform for assembly of factors that regulate transcription initiation, elongation, termination and mRNA processing. In Drosophila melanogaster (Fruit fly), this protein is DNA-directed RNA polymerase II subunit RPB1.